The primary structure comprises 105 residues: Synaptic plasticity regulator PANTS (105 aa).

Belongs to the UPF0545 family. As to quaternary structure, interacts with RTN4 isoform A/Nogo-A; the interaction results in enhanced RTN4-mediated inhibition of AMPA receptor clustering. Also interacts with NCAM1, RANBP2 and CCT8. Rapidly degraded by proteolysis following neuronal stimulation, resulting in increased AMPA receptor clustering.

Its subcellular location is the synapse. The protein resides in the synaptic cleft. Functionally, negatively regulates long-term potentiation and modulates adult synaptic plasticity. Stabilizes the interaction of RTN4 isoform A/Nogo-A with its receptors, inhibiting clustering of postsynaptic AMPA receptors at synaptic sites. Upon neuronal stimulation, degraded at synapses, reducing RTN4 signaling and allowing AMPA receptor clustering at individual synapses. This chain is Synaptic plasticity regulator PANTS (C22orf39), found in Homo sapiens (Human).